The primary structure comprises 218 residues: DNA endonuclease I-CeuI (218 aa).

Mg(2+) is bound by residues G65 and E66. Positions 71–75 are interaction with DNA; that stretch reads ISTKK. Position 86 (D86) interacts with Mg(2+). Interaction with DNA stretches follow at residues 90 to 94, 114 to 116, and 191 to 199; these read NVTQH, RHK, and KQQGQSNEG.

This sequence belongs to the LAGLIDADG endonuclease family. In terms of assembly, homodimer. Mg(2+) serves as cofactor.

Its subcellular location is the plastid. It localises to the chloroplast. Its function is as follows. Endonuclease involved in intron homing. Recognizes a degenerate sequence of 17-19 bp to produce a staggered cut 5 bp downstream from the CeLSU.5 intron insertion site. The protein is DNA endonuclease I-CeuI of Chlamydomonas moewusii (Chlamydomonas eugametos).